The chain runs to 361 residues: S-adenosylmethionine:tRNA ribosyltransferase-isomerase (361 aa).

Belongs to the QueA family. As to quaternary structure, monomer.

It localises to the cytoplasm. It carries out the reaction 7-aminomethyl-7-carbaguanosine(34) in tRNA + S-adenosyl-L-methionine = epoxyqueuosine(34) in tRNA + adenine + L-methionine + 2 H(+). Its pathway is tRNA modification; tRNA-queuosine biosynthesis. Transfers and isomerizes the ribose moiety from AdoMet to the 7-aminomethyl group of 7-deazaguanine (preQ1-tRNA) to give epoxyqueuosine (oQ-tRNA). This chain is S-adenosylmethionine:tRNA ribosyltransferase-isomerase, found in Glaesserella parasuis serovar 5 (strain SH0165) (Haemophilus parasuis).